A 179-amino-acid chain; its full sequence is Alkyl hydroperoxide reductase AhpD (179 aa).

C130 serves as the catalytic Proton donor. C130 and C133 are oxidised to a cystine. C133 serves as the catalytic Cysteine sulfenic acid (-SOH) intermediate.

Belongs to the AhpD family. As to quaternary structure, homotrimer.

It catalyses the reaction N(6)-[(R)-dihydrolipoyl]-L-lysyl-[lipoyl-carrier protein] + a hydroperoxide = N(6)-[(R)-lipoyl]-L-lysyl-[lipoyl-carrier protein] + an alcohol + H2O. Functionally, antioxidant protein with alkyl hydroperoxidase activity. Required for the reduction of the AhpC active site cysteine residues and for the regeneration of the AhpC enzyme activity. The protein is Alkyl hydroperoxide reductase AhpD of Nocardia farcinica (strain IFM 10152).